Here is an 892-residue protein sequence, read N- to C-terminus: UPF0182 protein Gura_0902 (892 aa).

A run of 7 helical transmembrane segments spans residues phenylalanine 6–phenylalanine 26, valine 50–phenylalanine 70, leucine 103–tryptophan 123, methionine 158–tyrosine 178, leucine 201–cysteine 221, isoleucine 248–alanine 268, and leucine 271–proline 291.

The protein belongs to the UPF0182 family.

The protein resides in the cell membrane. In Geotalea uraniireducens (strain Rf4) (Geobacter uraniireducens), this protein is UPF0182 protein Gura_0902.